The primary structure comprises 199 residues: Early nodulin-like protein 3 (199 aa).

The signal sequence occupies residues 1 to 23 (MGLVMRFDLYLMFVMLMGLGFTI). The region spanning 27 to 128 (YKFYVGGKDG…GQKLAVKVLS (102 aa)) is the Phytocyanin domain. 2 N-linked (GlcNAc...) asparagine glycosylation sites follow: Asn57 and Asn83. Cysteines 82 and 116 form a disulfide. The interval 130–180 (VHHSHSPRHTSPSPSPVHQELSSPGPSPGVEPSSDSNSRVPAPGPATAPNS) is disordered. Low complexity predominate over residues 138–165 (HTSPSPSPVHQELSSPGPSPGVEPSSDS). Asn179 carries the GPI-anchor amidated asparagine lipid modification. Positions 180–199 (SAGLVGPGMVVLVIMISSLF) are cleaved as a propeptide — removed in mature form.

Belongs to the early nodulin-like (ENODL) family. As to expression, confined to flowers.

The protein resides in the cell membrane. In terms of biological role, may act as a carbohydrate transporter. The polypeptide is Early nodulin-like protein 3 (Arabidopsis thaliana (Mouse-ear cress)).